Consider the following 283-residue polypeptide: Pantothenate synthetase (283 aa).

Residue 31-38 (MGALHEGH) participates in ATP binding. Histidine 38 serves as the catalytic Proton donor. A (R)-pantoate-binding site is contributed by glutamine 62. Position 62 (glutamine 62) interacts with beta-alanine. 148 to 151 (GKKD) provides a ligand contact to ATP. Glutamine 154 is a (R)-pantoate binding site. Residues valine 177 and 185-188 (RSSR) each bind ATP.

It belongs to the pantothenate synthetase family. In terms of assembly, homodimer.

The protein resides in the cytoplasm. It carries out the reaction (R)-pantoate + beta-alanine + ATP = (R)-pantothenate + AMP + diphosphate + H(+). Its pathway is cofactor biosynthesis; (R)-pantothenate biosynthesis; (R)-pantothenate from (R)-pantoate and beta-alanine: step 1/1. Its function is as follows. Catalyzes the condensation of pantoate with beta-alanine in an ATP-dependent reaction via a pantoyl-adenylate intermediate. This is Pantothenate synthetase from Staphylococcus haemolyticus (strain JCSC1435).